A 505-amino-acid polypeptide reads, in one-letter code: Probable alpha-L-arabinofuranosidase C (505 aa).

N-linked (GlcNAc...) asparagine glycosylation is found at Asn152, Asn181, and Asn269.

The protein belongs to the glycosyl hydrolase 51 family.

The protein localises to the secreted. The enzyme catalyses Hydrolysis of terminal non-reducing alpha-L-arabinofuranoside residues in alpha-L-arabinosides.. It participates in glycan metabolism; L-arabinan degradation. In terms of biological role, alpha-L-arabinofuranosidase involved in the degradation of arabinoxylan, a major component of plant hemicellulose. Acts only on small linear 1,5-alpha-linked L-arabinofuranosyl oligosaccharides. The polypeptide is Probable alpha-L-arabinofuranosidase C (abfC) (Aspergillus niger (strain ATCC MYA-4892 / CBS 513.88 / FGSC A1513)).